The primary structure comprises 229 residues: Potassium/proton antiporter CemA (229 aa).

3 consecutive transmembrane segments (helical) span residues 7 to 27, 106 to 126, and 189 to 209; these read LTPL…SISF, IILH…YSIL, and IISG…KYWI.

It belongs to the CemA family.

It localises to the plastid. The protein resides in the chloroplast inner membrane. It carries out the reaction K(+)(in) + H(+)(out) = K(+)(out) + H(+)(in). Functionally, contributes to K(+)/H(+) antiport activity by supporting proton efflux to control proton extrusion and homeostasis in chloroplasts in a light-dependent manner to modulate photosynthesis. Prevents excessive induction of non-photochemical quenching (NPQ) under continuous-light conditions. Indirectly promotes efficient inorganic carbon uptake into chloroplasts. This chain is Potassium/proton antiporter CemA, found in Liriodendron tulipifera (Tuliptree).